The chain runs to 292 residues: 3-methyl-2-oxobutanoate hydroxymethyltransferase 2 (292 aa).

Aspartate 52 and aspartate 91 together coordinate Mg(2+). Residues 52–53 (DS), aspartate 91, and lysine 120 each bind 3-methyl-2-oxobutanoate. Glutamate 122 contacts Mg(2+). Catalysis depends on glutamate 189, which acts as the Proton acceptor.

This sequence belongs to the PanB family. As to quaternary structure, homodecamer; pentamer of dimers. Requires Mg(2+) as cofactor.

It is found in the cytoplasm. It carries out the reaction 3-methyl-2-oxobutanoate + (6R)-5,10-methylene-5,6,7,8-tetrahydrofolate + H2O = 2-dehydropantoate + (6S)-5,6,7,8-tetrahydrofolate. The protein operates within cofactor biosynthesis; (R)-pantothenate biosynthesis; (R)-pantoate from 3-methyl-2-oxobutanoate: step 1/2. Its function is as follows. Catalyzes the reversible reaction in which hydroxymethyl group from 5,10-methylenetetrahydrofolate is transferred onto alpha-ketoisovalerate to form ketopantoate. The protein is 3-methyl-2-oxobutanoate hydroxymethyltransferase 2 of Bradyrhizobium diazoefficiens (strain JCM 10833 / BCRC 13528 / IAM 13628 / NBRC 14792 / USDA 110).